A 243-amino-acid polypeptide reads, in one-letter code: tRNA (guanine-N(7)-)-methyltransferase (243 aa).

Glutamate 74, glutamate 99, aspartate 126, and aspartate 149 together coordinate S-adenosyl-L-methionine. The active site involves aspartate 149. Substrate is bound by residues lysine 153, aspartate 185, and threonine 221–glutamate 224.

Belongs to the class I-like SAM-binding methyltransferase superfamily. TrmB family.

It carries out the reaction guanosine(46) in tRNA + S-adenosyl-L-methionine = N(7)-methylguanosine(46) in tRNA + S-adenosyl-L-homocysteine. It participates in tRNA modification; N(7)-methylguanine-tRNA biosynthesis. Functionally, catalyzes the formation of N(7)-methylguanine at position 46 (m7G46) in tRNA. This Psychromonas ingrahamii (strain DSM 17664 / CCUG 51855 / 37) protein is tRNA (guanine-N(7)-)-methyltransferase.